The primary structure comprises 875 residues: DNA mismatch repair protein MutS (875 aa).

Residue 625–632 (GPNMGGKS) participates in ATP binding.

The protein belongs to the DNA mismatch repair MutS family.

Its function is as follows. This protein is involved in the repair of mismatches in DNA. It is possible that it carries out the mismatch recognition step. This protein has a weak ATPase activity. The protein is DNA mismatch repair protein MutS of Symbiobacterium thermophilum (strain DSM 24528 / JCM 14929 / IAM 14863 / T).